A 305-amino-acid polypeptide reads, in one-letter code: Homoserine kinase (305 aa).

93–103 (PLSRGLGSSAT) contacts ATP.

Belongs to the GHMP kinase family. Homoserine kinase subfamily.

The protein localises to the cytoplasm. It carries out the reaction L-homoserine + ATP = O-phospho-L-homoserine + ADP + H(+). Its pathway is amino-acid biosynthesis; L-threonine biosynthesis; L-threonine from L-aspartate: step 4/5. Catalyzes the ATP-dependent phosphorylation of L-homoserine to L-homoserine phosphate. This is Homoserine kinase from Picosynechococcus sp. (strain ATCC 27264 / PCC 7002 / PR-6) (Agmenellum quadruplicatum).